The chain runs to 353 residues: Ribosome biogenesis protein BRX1 homolog (353 aa).

Basic residues predominate over residues M1–G10. A disordered region spans residues M1–R46. Residues E60–G249 form the Brix domain. A Glycyl lysine isopeptide (Lys-Gly) (interchain with G-Cter in SUMO2) cross-link involves residue K160. At S261 the chain carries Phosphoserine. K276 is subject to N6-acetyllysine. Glycyl lysine isopeptide (Lys-Gly) (interchain with G-Cter in SUMO2) cross-links involve residues K314 and K322.

The protein belongs to the BRX1 family.

Its subcellular location is the nucleus. The protein localises to the nucleolus. Required for biogenesis of the 60S ribosomal subunit. This Bos taurus (Bovine) protein is Ribosome biogenesis protein BRX1 homolog (BRIX1).